We begin with the raw amino-acid sequence, 260 residues long: Electron transfer flavoprotein subunit beta (260 aa).

It belongs to the ETF beta-subunit/FixA family. As to quaternary structure, heterodimer of an alpha and a beta subunit. It depends on FAD as a cofactor. AMP is required as a cofactor.

Its function is as follows. The electron transfer flavoprotein serves as a specific electron acceptor for other dehydrogenases. It transfers the electrons to the main respiratory chain via ETF-ubiquinone oxidoreductase (ETF dehydrogenase). In Thermoanaerobacterium thermosaccharolyticum (strain ATCC 7956 / DSM 571 / NCIMB 9385 / NCA 3814 / NCTC 13789 / WDCM 00135 / 2032) (Clostridium thermosaccharolyticum), this protein is Electron transfer flavoprotein subunit beta (etfB).